Here is a 203-residue protein sequence, read N- to C-terminus: V-type ATP synthase subunit D (203 aa).

Belongs to the V-ATPase D subunit family.

In terms of biological role, produces ATP from ADP in the presence of a proton gradient across the membrane. The protein is V-type ATP synthase subunit D of Streptococcus pneumoniae (strain CGSP14).